We begin with the raw amino-acid sequence, 201 residues long: UPF0301 protein MSMEG_6921/MSMEI_6732 (201 aa).

This sequence belongs to the UPF0301 (AlgH) family.

This is UPF0301 protein MSMEG_6921/MSMEI_6732 from Mycolicibacterium smegmatis (strain ATCC 700084 / mc(2)155) (Mycobacterium smegmatis).